Reading from the N-terminus, the 1146-residue chain is Ankyrin repeat domain-containing protein 24 (1146 aa).

5 ANK repeats span residues 81-110 (EGKS…NVMS), 114-143 (AGYN…VVDV), 147-176 (SGWT…HLNP), 180-209 (SGAT…AAND), and 213-242 (QGRT…QPGI). Disordered stretches follow at residues 272–320 (RPSP…PDDR), 607–627 (REME…GAQA), and 766–785 (ERVR…GDTT). The segment covering 286–297 (EASSQNSMSSHG) has biased composition (polar residues). Residues 320–517 (RDAYEEIVRL…QALRQQETRE (198 aa)) are a coiled coil. Residues 714-1110 (AAEASEKLQV…AARDHSSVVA (397 aa)) are a coiled coil.

In terms of assembly, homodimer. Interacts (via C-terminal domain) with TRIOBP (via C-terminal domain) isoform 4; recruits TRIOBP isoform 4 to stereocilia rootlets.

It localises to the cell membrane. Its subcellular location is the cell projection. The protein resides in the stereocilium. Component of the stereocilia rootlet in hair cells of inner ear. Bridges the apical plasma membrane with the lower rootlet and maintains normal distribution of TRIOBP, thereby reinforcing stereocilia insertion points and organizing rootlets for hearing with long-term resilience. The protein is Ankyrin repeat domain-containing protein 24 of Homo sapiens (Human).